The primary structure comprises 132 residues: Salivary protein 15 Iper-2 (132 aa).

An N-terminal signal peptide occupies residues 1–18; it reads MKVVCIIVLFVIVAVNES. Residues Asn24, Asn36, Asn62, Asn89, and Asn101 are each glycosylated (N-linked (GlcNAc...) asparagine). The segment at 113–132 is CD4-binding; the sequence is GPNGQTCADKSQCVGHIPGC.

It belongs to the salp15 family. As to quaternary structure, interacts with host CD4. Interacts with host DC-SIGN (CD209). In terms of assembly, (Microbial infection) Interacts with Borrelia outer surface protein C (OspC). In terms of tissue distribution, expressed in salivary glands from feeding female ticks. Highly expressed 1 day after start of feeding, and weakly expressed at the initiation of feeding and 4 days after start of feeding.

It localises to the secreted. In terms of biological role, salivary tick protein that downregulates host immune system by binding to both dendritic cells, and CD4(+) T cells. Specifically binds to the CD4 coreceptor on T cells. This interaction prevents the activation of the Src kinase, Lck, and its downstream substrate Zap-70, and results in deficient activation of PLCgamma1, the repression of calcium fluxes triggered by T-cell antigen receptor (TCR) ligation, and a subsequent reduction in interleukin-2 production. This salivary protein also binds to DC-SIGN (CD209) on dendritic cells (DC) and activates the Raf-1 kinase/MEK signaling pathway that results in down-regulating expression of pro-inflammatory cytokines. Furthermore, it inhibits T cell proliferation induced by DCs. It also inhibits in vitro keratinocyte inflammation induced by Borrelia burgdorferi or by the major outer surface protein (OspC) of Borrelia. In addition, it downregulates chemokines and monocyte chemoattractant protein 1, as well as several antimicrobial peptides such as defensins, cathelicidin, psoriasin, and RNase 7. Apart from its immunomodulatory activities, it is also associated with protection of Borrelia spirochetes from antibody-mediated killing through its binding to OspC. In vivo, tests on different immune disease animal models show promising therapeutic results, e.g., in inhibiting HIV infection, experimental autoimmune encephalomyelitis, transplantation rejection, and asthma. Functionally, (Microbial infection) Protects Borrelia garinii from anti-Borrelia antibody-mediated cytotoxicity in vitro. May facilitate B.garinii transmission in mouse model. (Microbial infection) Protects Borrelia burgdorferi from anti-Borrelia antibody-mediated cytotoxicity in vitro. Its function is as follows. (Microbial infection) Protects Borrelia afzelii from anti-Borrelia antibody-mediated cytotoxicity in vitro. The protein is Salivary protein 15 Iper-2 of Ixodes persulcatus (Taiga tick).